Reading from the N-terminus, the 787-residue chain is Protein translocase subunit SecA (787 aa).

ATP contacts are provided by residues Gln-85, 103-107 (GEGKT), and Asp-492.

Belongs to the SecA family. Monomer and homodimer. Part of the essential Sec protein translocation apparatus which comprises SecA, SecYEG and auxiliary proteins SecDF. Other proteins may also be involved.

Its subcellular location is the cell membrane. The protein localises to the cytoplasm. It catalyses the reaction ATP + H2O + cellular proteinSide 1 = ADP + phosphate + cellular proteinSide 2.. In terms of biological role, part of the Sec protein translocase complex. Interacts with the SecYEG preprotein conducting channel. Has a central role in coupling the hydrolysis of ATP to the transfer of proteins into and across the cell membrane, serving as an ATP-driven molecular motor driving the stepwise translocation of polypeptide chains across the membrane. This is Protein translocase subunit SecA from Lactiplantibacillus plantarum (strain ATCC BAA-793 / NCIMB 8826 / WCFS1) (Lactobacillus plantarum).